Reading from the N-terminus, the 662-residue chain is Acetyl-coenzyme A synthetase (662 aa).

CoA contacts are provided by residues 197–200 (RKGK) and threonine 317. Residues 393–395 (GEP), 417–422 (DTWWQT), aspartate 510, and arginine 525 each bind ATP. Serine 533 lines the CoA pocket. Residue arginine 536 coordinates ATP. Residues histidine 549 and valine 552 each contribute to the Mg(2+) site. Residue lysine 623 is modified to N6-acetyllysine.

Belongs to the ATP-dependent AMP-binding enzyme family. The cofactor is Mg(2+). Post-translationally, acetylated. Deacetylation by the SIR2-homolog deacetylase activates the enzyme.

It catalyses the reaction acetate + ATP + CoA = acetyl-CoA + AMP + diphosphate. Its function is as follows. Catalyzes the conversion of acetate into acetyl-CoA (AcCoA), an essential intermediate at the junction of anabolic and catabolic pathways. AcsA undergoes a two-step reaction. In the first half reaction, AcsA combines acetate with ATP to form acetyl-adenylate (AcAMP) intermediate. In the second half reaction, it can then transfer the acetyl group from AcAMP to the sulfhydryl group of CoA, forming the product AcCoA. This is Acetyl-coenzyme A synthetase from Helicobacter acinonychis (strain Sheeba).